The chain runs to 154 residues: uncharacterized protein (154 aa).

A run of 5 helical transmembrane segments spans residues 5–24, 29–48, 53–75, 87–109, and 124–146; these read TLII…GVLL, FYAA…IYAA, PVVV…AIAA, IFWV…SMAV, and ATDY…LSAI.

The protein localises to the cell membrane. This is an uncharacterized protein from Archaeoglobus fulgidus (strain ATCC 49558 / DSM 4304 / JCM 9628 / NBRC 100126 / VC-16).